The chain runs to 311 residues: Olfactory receptor-like protein OLF1 (311 aa).

The Extracellular portion of the chain corresponds to 1–24; the sequence is MDGNYTLVTEFILLGFPTRPELQI. The N-linked (GlcNAc...) asparagine glycan is linked to Asn-4. A helical membrane pass occupies residues 25 to 48; that stretch reads VLFLVFLTLYGIILTGNIGLMMLI. Topologically, residues 49–56 are cytoplasmic; sequence RTDPHLQT. Residues 57 to 78 traverse the membrane as a helical segment; that stretch reads PMYFFLSNLSFADLCFSSAIVP. The Extracellular segment spans residues 79 to 99; the sequence is KMLVNFLSENKSISLYGCALQ. Residues 100–119 traverse the membrane as a helical segment; it reads FYFSCAFADTESFILAAMAY. Residues 120–138 lie on the Cytoplasmic side of the membrane; it reads DRYVAICNPLLYTVVMSRG. A helical transmembrane segment spans residues 139–157; it reads ICVWLIVLSYIGGNMSSLV. Over 158–195 the chain is Extracellular; it reads HTSFAFILKYCDKNVINHFFCDLPPLLKLSCTDTSVNE. The chain crosses the membrane as a helical span at residues 196–218; the sequence is WLLSTYGSSVEIFCFIVIVISYY. Residues 219 to 235 lie on the Cytoplasmic side of the membrane; that stretch reads FILRSVLRIRSSSGRKK. The helical transmembrane segment at 236-259 threads the bilayer; sequence TFSTCASHLTSVAIYQGTLLFIYS. Over 260–271 the chain is Extracellular; it reads RPTYLYTPNTDK. The helical transmembrane segment at 272–291 threads the bilayer; that stretch reads IISVFYTIIIPVLNPLIYSL. Topologically, residues 292–311 are cytoplasmic; it reads RNKDVKDAAKRAVRLKVDSS.

The protein belongs to the G-protein coupled receptor 1 family.

Its subcellular location is the cell membrane. Putative odorant or sperm cell receptor. The polypeptide is Olfactory receptor-like protein OLF1 (Canis lupus familiaris (Dog)).